The primary structure comprises 510 residues: GMP synthase [glutamine-hydrolyzing] (510 aa).

The Glutamine amidotransferase type-1 domain occupies 5–194 (DILVLDFGSQ…FAKICGCEST (190 aa)). Cys-82 acts as the Nucleophile in catalysis. Catalysis depends on residues His-169 and Glu-171. The GMPS ATP-PPase domain maps to 195–385 (WNMGSFAKKE…LGLSRDIVYR (191 aa)). Position 222–228 (222–228 (SGGVDSS)) interacts with ATP.

As to quaternary structure, homodimer.

The catalysed reaction is XMP + L-glutamine + ATP + H2O = GMP + L-glutamate + AMP + diphosphate + 2 H(+). It participates in purine metabolism; GMP biosynthesis; GMP from XMP (L-Gln route): step 1/1. In terms of biological role, catalyzes the synthesis of GMP from XMP. This is GMP synthase [glutamine-hydrolyzing] from Campylobacter fetus subsp. fetus (strain 82-40).